We begin with the raw amino-acid sequence, 427 residues long: Glutamate-1-semialdehyde 2,1-aminomutase (427 aa).

Lys265 carries the post-translational modification N6-(pyridoxal phosphate)lysine.

It belongs to the class-III pyridoxal-phosphate-dependent aminotransferase family. HemL subfamily. As to quaternary structure, homodimer. Pyridoxal 5'-phosphate serves as cofactor.

Its subcellular location is the cytoplasm. It carries out the reaction (S)-4-amino-5-oxopentanoate = 5-aminolevulinate. It participates in porphyrin-containing compound metabolism; protoporphyrin-IX biosynthesis; 5-aminolevulinate from L-glutamyl-tRNA(Glu): step 2/2. The protein is Glutamate-1-semialdehyde 2,1-aminomutase of Pseudomonas syringae pv. tomato (strain ATCC BAA-871 / DC3000).